The primary structure comprises 979 residues: Pro-apoptotic serine protease NMA111 (979 aa).

The segment at 1–20 (MTIMNEGKKRSHSSSSDDHL) is disordered. The serine protease stretch occupies residues 65–255 (VVSIHFAQVA…LPLDRILRAL (191 aa)). Catalysis depends on charge relay system residues His103, Asp134, and Ser217. 2 consecutive PDZ domains span residues 273–361 (WLLK…RGGT) and 750–836 (SILH…VRDG).

This sequence belongs to the peptidase S1C family.

The protein localises to the nucleus. Functionally, nuclear serine protease which mediates apoptosis. The polypeptide is Pro-apoptotic serine protease NMA111 (NMA111) (Candida glabrata (strain ATCC 2001 / BCRC 20586 / JCM 3761 / NBRC 0622 / NRRL Y-65 / CBS 138) (Yeast)).